Reading from the N-terminus, the 813-residue chain is Kinesin-like protein KIN-8B (813 aa).

The Kinesin motor domain maps to 14–345; sequence TLTVAVKCRP…LKYADRAKEI (332 aa). Position 104 to 111 (104 to 111) interacts with ATP; the sequence is GSTGSGKT. Residues 349–391 are a coiled coil; it reads IQKNIGTIDTHMSDYQRMIDNLQSEVSQLKTQLAEKESQLSIK. 2 disordered regions span residues 664 to 694 and 756 to 813; these read GSRP…PRMA and AVST…RQHQ. Composition is skewed to polar residues over residues 682-694, 761-791, and 804-813; these read YPQT…PRMA, GARN…NSHT, and KGNNTQRQHQ.

Belongs to the TRAFAC class myosin-kinesin ATPase superfamily. Kinesin family. KIN-8 subfamily.

This chain is Kinesin-like protein KIN-8B, found in Arabidopsis thaliana (Mouse-ear cress).